A 151-amino-acid polypeptide reads, in one-letter code: Acidic phospholipase A2 5 (151 aa).

The first 27 residues, 1-27 (MYPAHLLVLLAVCVSLLGAASIPARPL), serve as a signal peptide directing secretion. 7 disulfides stabilise this stretch: Cys-38–Cys-104, Cys-54–Cys-151, Cys-56–Cys-72, Cys-71–Cys-132, Cys-78–Cys-125, Cys-88–Cys-118, and Cys-111–Cys-123. 3 residues coordinate Ca(2+): Tyr-55, Gly-57, and Gly-59. His-75 is a catalytic residue. Asp-76 is a binding site for Ca(2+). Asp-126 is a catalytic residue.

This sequence belongs to the phospholipase A2 family. Group I subfamily. D49 sub-subfamily. The cofactor is Ca(2+). As to expression, expressed by the venom gland.

It is found in the secreted. It catalyses the reaction a 1,2-diacyl-sn-glycero-3-phosphocholine + H2O = a 1-acyl-sn-glycero-3-phosphocholine + a fatty acid + H(+). PLA2 catalyzes the calcium-dependent hydrolysis of the 2-acyl groups in 3-sn-phosphoglycerides. This Tropidechis carinatus (Australian rough-scaled snake) protein is Acidic phospholipase A2 5.